A 144-amino-acid chain; its full sequence is Urease accessory protein UreE (144 aa).

The protein belongs to the UreE family.

The protein localises to the cytoplasm. Its function is as follows. Involved in urease metallocenter assembly. Binds nickel. Probably functions as a nickel donor during metallocenter assembly. The polypeptide is Urease accessory protein UreE (Thermosynechococcus vestitus (strain NIES-2133 / IAM M-273 / BP-1)).